The chain runs to 575 residues: Estrogen receptor beta (575 aa).

Residues methionine 1 to phenylalanine 160 are modulating. A disordered region spans residues aspartate 108–glycine 151. Positions glycine 134–proline 145 are enriched in acidic residues. 2 consecutive NR C4-type zinc fingers follow at residues cysteine 161–cysteine 181 and cysteine 197–cysteine 221. The segment at residues cysteine 161 to methionine 226 is a DNA-binding region (nuclear receptor). The NR LBD domain maps to serine 290–asparagine 526. The segment covering valine 537 to asparagine 549 has biased composition (polar residues). The tract at residues valine 537–histidine 557 is disordered.

This sequence belongs to the nuclear hormone receptor family. NR3 subfamily. As to quaternary structure, binds DNA as a homodimer. Can form a heterodimer with ER-alpha. Ovary and testis.

The protein localises to the nucleus. Binds estrogens with an affinity similar to that of ER-alpha, and activates expression of reporter genes containing estrogen response elements (ERE) in an estrogen-dependent manner. The protein is Estrogen receptor beta (esr2) of Ictalurus punctatus (Channel catfish).